The following is a 257-amino-acid chain: Ribonuclease PH (257 aa).

Residues Arg88 and Gly126 to Arg128 each bind phosphate.

This sequence belongs to the RNase PH family. In terms of assembly, homohexameric ring arranged as a trimer of dimers.

The catalysed reaction is tRNA(n+1) + phosphate = tRNA(n) + a ribonucleoside 5'-diphosphate. Functionally, phosphorolytic 3'-5' exoribonuclease that plays an important role in tRNA 3'-end maturation. Removes nucleotide residues following the 3'-CCA terminus of tRNAs; can also add nucleotides to the ends of RNA molecules by using nucleoside diphosphates as substrates, but this may not be physiologically important. Probably plays a role in initiation of 16S rRNA degradation (leading to ribosome degradation) during starvation. In Nocardia farcinica (strain IFM 10152), this protein is Ribonuclease PH.